The sequence spans 202 residues: Putative pre-16S rRNA nuclease (202 aa).

Disordered stretches follow at residues 1-27 (MSGS…GVRI) and 170-202 (GCAA…SDER). The span at 9–20 (GDSRPGDSRPGD) shows a compositional bias: basic and acidic residues.

It belongs to the YqgF nuclease family.

The protein localises to the cytoplasm. Its function is as follows. Could be a nuclease involved in processing of the 5'-end of pre-16S rRNA. This Frankia casuarinae (strain DSM 45818 / CECT 9043 / HFP020203 / CcI3) protein is Putative pre-16S rRNA nuclease.